A 916-amino-acid polypeptide reads, in one-letter code: Internalin J (916 aa).

An N-terminal signal peptide occupies residues 1–25 (MKTSKIIIASLVSLTLVSNPILTFA). 14 LRR repeats span residues 94 to 115 (TLTS…EKLT), 116 to 136 (GLTK…SQNT), 137 to 157 (NLTY…TPLT), 158 to 179 (KLTY…QNPL), 180 to 200 (LTYL…HNTQ), 201 to 221 (LTEL…TPQT), 222 to 243 (QLTT…QNKL), 244 to 263 (LNRL…NQNI), 264 to 284 (QLTF…TPLT), 285 to 306 (QLTY…TLSK), 316 to 325 (DLLEIDLTHN), 338 to 357 (KIKE…DCQA), 359 to 368 (GITELDLSQN), and 380 to 402 (ELTK…NAHI). MucBP domains follow at residues 506 to 568 (PIKG…SQSV), 576 to 638 (IVAA…SQTV), 646 to 708 (IVAA…AQTV), 717 to 779 (APEK…SQTV), and 787 to 849 (IVAA…AQTV). The interval 862-888 (PLPDKKTTKPSNLKTTEVKKASDTLPK) is disordered. The LPXTG sorting signal signature appears at 886–890 (LPKTG). Threonine 889 is subject to Pentaglycyl murein peptidoglycan amidated threonine. Positions 890–916 (GDSTPWKSALLGVFLSSTALVIWKKKK) are cleaved as a propeptide — removed by sortase.

The protein belongs to the internalin family.

Its subcellular location is the secreted. The protein resides in the cell wall. Functionally, involved in several steps of L.monocytogenes infection, probably improves adhesin to host cells. This is Internalin J (inlJ) from Listeria monocytogenes serotype 4b (strain F2365).